A 982-amino-acid chain; its full sequence is Mineralocorticoid receptor (982 aa).

The tract at residues 1 to 601 (METKGYHSLP…STGSSRPSKI (601 aa)) is modulating. Residues 230 to 242 (QGTPLTCSPNVEN) show a composition bias toward polar residues. Disordered stretches follow at residues 230-328 (QGTP…AAST) and 345-375 (SGTS…PFPK). 5 positions are modified to phosphoserine: Ser249, Ser258, Ser282, Ser286, and Ser298. Low complexity predominate over residues 258–299 (SPLSSPLSSMKSSISSPPSHCSVKSPVSSPNNVTPRSSVSSP). The span at 300–328 (ANINNSRCSVSSPSNTNNRSTLSSPAAST) shows a compositional bias: polar residues. Residues 345–354 (SGTSAGSSTS) show a composition bias toward low complexity. Zn(2+)-binding residues include Cys602, Cys605, Cys619, Cys622, Cys638, Cys644, Cys654, and Cys657. 2 NR C4-type zinc fingers span residues 602–622 (CLVC…CGSC) and 638–662 (CAGR…LQKC). Residues 602–667 (CLVCGDEASG…RLQKCLQAGM (66 aa)) constitute a DNA-binding region (nuclear receptor). The tract at residues 668–723 (NLGARRSKKLGKLKGIHEEQPQQQPPPPPPPPQSPEEGTTYIAPAKEPSVNTALVP) is hinge. The segment at 682 to 708 (GIHEEQPQQQPPPPPPPPQSPEEGTTY) is disordered. Residues 690–701 (QQPPPPPPPPQS) are compositionally biased toward pro residues. One can recognise an NR LBD domain in the interval 724 to 962 (QLSAISRALT…EFPAMLVEII (239 aa)). Positions 768 and 774 each coordinate 21-hydroxyprogesterone. Asn768 and Gln774 together coordinate aldosterone. Progesterone is bound by residues Asn768 and Gln774. The tract at residues 780–783 (KWAK) is important for coactivator binding. The 21-hydroxyprogesterone site is built by Arg815 and Thr943. Positions 815 and 943 each coordinate aldosterone. Progesterone contacts are provided by Arg815 and Thr943.

The protein belongs to the nuclear hormone receptor family. NR3 subfamily. Phosphorylated. As to expression, expressed in hippocampus, being restricted to the more superficial cortical layers.

The protein localises to the cytoplasm. The protein resides in the nucleus. In terms of biological role, receptor for both mineralocorticoids (MC) such as aldosterone and glucocorticoids (GC) such as corticosterone or cortisol. Binds to mineralocorticoid response elements (MRE) and transactivates target genes. The effect of MC is to increase ion and water transport and thus raise extracellular fluid volume and blood pressure and lower potassium levels. The chain is Mineralocorticoid receptor (NR3C2) from Saimiri sciureus (Common squirrel monkey).